Reading from the N-terminus, the 307-residue chain is Protein TIPIN homolog (307 aa).

2 disordered regions span residues 1 to 50 (MASL…SQDA) and 252 to 279 (ASMD…LSNE). The span at 262–271 (PLPPSQPPTP) shows a compositional bias: pro residues.

This sequence belongs to the CSM3 family.

The protein resides in the cytoplasm. Its subcellular location is the nucleus. Its function is as follows. Required for normal progression of S-phase. Important for cell survival after DNA damage or replication stress. This is Protein TIPIN homolog from Drosophila melanogaster (Fruit fly).